The chain runs to 184 residues: ATP synthase subunit b, chloroplastic (184 aa).

The helical transmembrane segment at 31-53 (LINLGIVISLLIYFGKGVLSNLL) threads the bilayer.

The protein belongs to the ATPase B chain family. In terms of assembly, F-type ATPases have 2 components, F(1) - the catalytic core - and F(0) - the membrane proton channel. F(1) has five subunits: alpha(3), beta(3), gamma(1), delta(1), epsilon(1). F(0) has four main subunits: a(1), b(1), b'(1) and c(10-14). The alpha and beta chains form an alternating ring which encloses part of the gamma chain. F(1) is attached to F(0) by a central stalk formed by the gamma and epsilon chains, while a peripheral stalk is formed by the delta, b and b' chains.

It localises to the plastid. Its subcellular location is the chloroplast thylakoid membrane. F(1)F(0) ATP synthase produces ATP from ADP in the presence of a proton or sodium gradient. F-type ATPases consist of two structural domains, F(1) containing the extramembraneous catalytic core and F(0) containing the membrane proton channel, linked together by a central stalk and a peripheral stalk. During catalysis, ATP synthesis in the catalytic domain of F(1) is coupled via a rotary mechanism of the central stalk subunits to proton translocation. In terms of biological role, component of the F(0) channel, it forms part of the peripheral stalk, linking F(1) to F(0). This Aneura mirabilis (Parasitic liverwort) protein is ATP synthase subunit b, chloroplastic.